The following is a 312-amino-acid chain: Porphobilinogen deaminase (312 aa).

C243 bears the S-(dipyrrolylmethanemethyl)cysteine mark.

This sequence belongs to the HMBS family. As to quaternary structure, monomer. It depends on dipyrromethane as a cofactor.

The catalysed reaction is 4 porphobilinogen + H2O = hydroxymethylbilane + 4 NH4(+). Its pathway is porphyrin-containing compound metabolism; protoporphyrin-IX biosynthesis; coproporphyrinogen-III from 5-aminolevulinate: step 2/4. Its function is as follows. Tetrapolymerization of the monopyrrole PBG into the hydroxymethylbilane pre-uroporphyrinogen in several discrete steps. The protein is Porphobilinogen deaminase of Vibrio campbellii (strain ATCC BAA-1116).